We begin with the raw amino-acid sequence, 295 residues long: MNIEKGTETVKKGMAQMQKGGVIMDVTTPEQAKIAEKAGAVAVMALEKVPADIRAGGGVARMADPEVIKKIMDAVSIPVMAKARIGHFVEARILENLGVDYIDESEVLTPADEYYHIDKNKFTVPFVCGARNLGEALRRVGEGASMMRTKGEAGTGNVVEAVRHIRTVMDGIRKVQNLPDDELMTEAKNIGAPYDLIKQVKEEGRLPVVNFAAGGVATPADAALMMQLGADGVFVGSGIFKSGDPEKRAKSIVEATLNYDNYDVLADVSSGLGEAMVGINVSDLEEQERMQNRGW.

Aspartate 25 is a D-ribose 5-phosphate binding site. The active-site Schiff-base intermediate with D-ribose 5-phosphate is the lysine 82. Position 154 (glycine 154) interacts with D-ribose 5-phosphate. D-glyceraldehyde 3-phosphate is bound at residue arginine 166. D-ribose 5-phosphate contacts are provided by residues glycine 215 and 236 to 237 (GS).

It belongs to the PdxS/SNZ family. As to quaternary structure, in the presence of PdxT, forms a dodecamer of heterodimers.

The enzyme catalyses aldehydo-D-ribose 5-phosphate + D-glyceraldehyde 3-phosphate + L-glutamine = pyridoxal 5'-phosphate + L-glutamate + phosphate + 3 H2O + H(+). It participates in cofactor biosynthesis; pyridoxal 5'-phosphate biosynthesis. Its function is as follows. Catalyzes the formation of pyridoxal 5'-phosphate from ribose 5-phosphate (RBP), glyceraldehyde 3-phosphate (G3P) and ammonia. The ammonia is provided by the PdxT subunit. Can also use ribulose 5-phosphate and dihydroxyacetone phosphate as substrates, resulting from enzyme-catalyzed isomerization of RBP and G3P, respectively. The polypeptide is Pyridoxal 5'-phosphate synthase subunit PdxS (Natranaerobius thermophilus (strain ATCC BAA-1301 / DSM 18059 / JW/NM-WN-LF)).